Here is a 260-residue protein sequence, read N- to C-terminus: Late transcription factor 1 (260 aa).

Belongs to the chordopoxvirinae VLTF-1 family. In terms of assembly, interacts with the late transcription factors VLTF-2 and VLTF-3. Interacts with the late transcription elongation factor VLTF-4. Interacts with itself.

In terms of biological role, associates with RNA polymerase to initiate transcription from late gene promoters. The sequence is that of Late transcription factor 1 (OPG093) from Homo sapiens (Human).